Consider the following 218-residue polypeptide: Thiopurine S-methyltransferase (218 aa).

S-adenosyl-L-methionine is bound by residues Trp-10, Leu-45, Glu-66, and Arg-123.

The protein belongs to the class I-like SAM-binding methyltransferase superfamily. TPMT family.

It localises to the cytoplasm. The enzyme catalyses S-adenosyl-L-methionine + a thiopurine = S-adenosyl-L-homocysteine + a thiopurine S-methylether.. This chain is Thiopurine S-methyltransferase, found in Xanthomonas euvesicatoria pv. vesicatoria (strain 85-10) (Xanthomonas campestris pv. vesicatoria).